The sequence spans 194 residues: Small COPII coat GTPase SAR1B (194 aa).

An STAR; SAR1-N-terminal activation recruitment. Required for the activation and subsequent recruitment to ER membrane motif is present at residues 2–4 (FLV). The segment at 10 to 14 (MFLWL) is mediates recruitment to ER membranes. 6 residues coordinate GDP: N30, A31, G32, K33, T34, and T35. A GTP-binding site is contributed by N30. Residues G32, K33, T34, and T35 each coordinate GTP. A Mg(2+)-binding site is contributed by D70. Residues K131, D133, and I172 each contribute to the GDP site. GTP contacts are provided by K131, D133, and I172.

This sequence belongs to the small GTPase superfamily. SAR1 family. In terms of assembly, homodimer; upon association with membrane. Part of the coat protein complex II/COPII, composed of SEC23/24 and SEC13/31 heterodimers, that it helps recruit and assemble on endoplasmic reticulum (ER) membranes at ER exit sites.

It localises to the endoplasmic reticulum membrane. The protein localises to the golgi apparatus. The protein resides in the golgi stack membrane. Its subcellular location is the cytoplasm. It is found in the cytosol. The catalysed reaction is GTP + H2O = GDP + phosphate + H(+). With respect to regulation, small GTPases activation is mediated by guanine exchange factors (GEF), while inactivation through hydrolysis of the bound GTP is stimulated by GTPase activating proteins (GAP). Functionally, small GTPase that cycles between an active GTP-bound and an inactive GDP-bound state and mainly functions in vesicle-mediated endoplasmic reticulum (ER) to Golgi transport. The active GTP-bound form inserts into the endoplasmic reticulum membrane where it recruits the remainder of the coat protein complex II/COPII. The coat protein complex II assembling and polymerizing on endoplasmic reticulum membrane is responsible for both the sorting of cargos and the deformation and budding of membranes into vesicles destined to the Golgi. The sequence is that of Small COPII coat GTPase SAR1B (sarB) from Dictyostelium discoideum (Social amoeba).